We begin with the raw amino-acid sequence, 146 residues long: Small ribosomal subunit protein uS5 (146 aa).

Positions 8–71 (FEEVIVNIGR…DDAFKNIIDV (64 aa)) constitute an S5 DRBM domain.

The protein belongs to the universal ribosomal protein uS5 family. Part of the 30S ribosomal subunit. Contacts proteins S4 and S8.

Its function is as follows. With S4 and S12 plays an important role in translational accuracy. Functionally, located at the back of the 30S subunit body where it stabilizes the conformation of the head with respect to the body. The protein is Small ribosomal subunit protein uS5 of Campylobacter hominis (strain ATCC BAA-381 / DSM 21671 / CCUG 45161 / LMG 19568 / NCTC 13146 / CH001A).